The chain runs to 971 residues: Outer capsid protein VP2 (971 aa).

It belongs to the orbivirus VP2 family.

Its subcellular location is the virion. Its function is as follows. The VP2 protein is one of the two proteins (with VP5) which constitute the virus particle outer capsid. It is the major target of the host immunogenic response. The sequence is that of Outer capsid protein VP2 (Segment-2) from Epizootic hemorrhagic disease virus 1 (EHDV-1).